Here is a 446-residue protein sequence, read N- to C-terminus: Chromosomal replication initiator protein DnaA (446 aa).

The domain I, interacts with DnaA modulators stretch occupies residues 1–72 (MKNISDLWNQ…ADTIYDLTGE (72 aa)). The tract at residues 72–109 (EELSIKFVIPQNQNEEDFMPKSPIKKMSKEEPADFPQN) is domain II. The segment at 110-326 (MLNPKYTFDT…GALIRVVAYS (217 aa)) is domain III, AAA+ region. 4 residues coordinate ATP: glycine 154, glycine 156, lysine 157, and threonine 158. The segment at 327 to 446 (SLINKDINAD…QIKEIKEQLR (120 aa)) is domain IV, binds dsDNA.

This sequence belongs to the DnaA family. Oligomerizes as a right-handed, spiral filament on DNA at oriC.

It is found in the cytoplasm. Its function is as follows. Plays an essential role in the initiation and regulation of chromosomal replication. ATP-DnaA binds to the origin of replication (oriC) to initiate formation of the DNA replication initiation complex once per cell cycle. Binds the DnaA box (a 9 base pair repeat at the origin) and separates the double-stranded (ds)DNA. Forms a right-handed helical filament on oriC DNA; dsDNA binds to the exterior of the filament while single-stranded (ss)DNA is stabiized in the filament's interior. The ATP-DnaA-oriC complex binds and stabilizes one strand of the AT-rich DNA unwinding element (DUE), permitting loading of DNA polymerase. After initiation quickly degrades to an ADP-DnaA complex that is not apt for DNA replication. Binds acidic phospholipids. The sequence is that of Chromosomal replication initiator protein DnaA from Bacillus licheniformis (strain ATCC 14580 / DSM 13 / JCM 2505 / CCUG 7422 / NBRC 12200 / NCIMB 9375 / NCTC 10341 / NRRL NRS-1264 / Gibson 46).